The primary structure comprises 318 residues: Homoserine kinase (318 aa).

Residue 97–107 (PIGSGLGSSAC) participates in ATP binding.

It belongs to the GHMP kinase family. Homoserine kinase subfamily.

It is found in the cytoplasm. The catalysed reaction is L-homoserine + ATP = O-phospho-L-homoserine + ADP + H(+). The protein operates within amino-acid biosynthesis; L-threonine biosynthesis; L-threonine from L-aspartate: step 4/5. Its function is as follows. Catalyzes the ATP-dependent phosphorylation of L-homoserine to L-homoserine phosphate. In Vibrio vulnificus (strain CMCP6), this protein is Homoserine kinase.